The chain runs to 178 residues: CD209 antigen-like protein C (178 aa).

Residues Cys48 and Cys59 are joined by a disulfide bond. The C-type lectin domain maps to 54 to 169 (VFQGNCYFFS…CTIKKYWICK (116 aa)). Asn70 carries N-linked (GlcNAc...) asparagine glycosylation. 2 disulfides stabilise this stretch: Cys76–Cys168 and Cys147–Cys160. Glu138, Asn140, Glu145, Asn156, and Asp157 together coordinate Ca(2+).

Functionally, probable pathogen-recognition receptor. May recognize in a calcium-dependent manner high mannose N-linked oligosaccharides in a variety of pathogen antigens. In Mus musculus (Mouse), this protein is CD209 antigen-like protein C (Cd209c).